The following is a 319-amino-acid chain: Beta-ketoacyl-[acyl-carrier-protein] synthase III (319 aa).

Catalysis depends on residues C114 and H246. Positions 247-251 (QANIR) are ACP-binding. Residue N276 is part of the active site.

It belongs to the thiolase-like superfamily. FabH family. As to quaternary structure, homodimer.

It localises to the cytoplasm. The enzyme catalyses malonyl-[ACP] + acetyl-CoA + H(+) = 3-oxobutanoyl-[ACP] + CO2 + CoA. It participates in lipid metabolism; fatty acid biosynthesis. Its function is as follows. Catalyzes the condensation reaction of fatty acid synthesis by the addition to an acyl acceptor of two carbons from malonyl-ACP. Catalyzes the first condensation reaction which initiates fatty acid synthesis and may therefore play a role in governing the total rate of fatty acid production. Possesses both acetoacetyl-ACP synthase and acetyl transacylase activities. Its substrate specificity determines the biosynthesis of branched-chain and/or straight-chain of fatty acids. The chain is Beta-ketoacyl-[acyl-carrier-protein] synthase III from Thiobacillus denitrificans (strain ATCC 25259 / T1).